The following is a 588-amino-acid chain: Protein cereblon (588 aa).

Disordered regions lie at residues 1–107 (MDDE…DDSD) and 159–197 (QERR…DIGF). A compositionally biased stretch (polar residues) spans 41-50 (AWNNATQDEQ). Residues 75-85 (MVEDVLQDDTA) show a composition bias toward acidic residues. Positions 86-96 (SEGSHPSSDMS) are enriched in polar residues. The segment covering 159–168 (QERRRSRTSE) has biased composition (basic and acidic residues). The segment covering 181–192 (NDPPPQQPPRPP) has biased composition (pro residues). Residues 228-454 (HMLIFLHQHI…LIKSTFKDES (227 aa)) form the Lon N-terminal domain. The CULT domain maps to 453 to 562 (ESLFFCRYCN…LAGSSVRIGK (110 aa)). Cys-458, Cys-461, Cys-527, and Cys-530 together coordinate Zn(2+).

The protein belongs to the CRBN family. Likely a component of a DCX (DDB1-CUL4-X-box) protein ligase complex. May interact with pic/DDB1. Post-translationally, ubiquitinated.

The protein resides in the nucleus. Its pathway is protein modification; protein ubiquitination. Substrate recognition component of a DCX (DDB1-CUL4-X-box) E3 protein ligase complex that mediates the ubiquitination and subsequent proteasomal degradation of target proteins. Has an essential role in mediating growth by negatively regulating insulin signaling. It also has a role in maintaining presynaptic function in the neuromuscular junction synapses of third-instar larvae. The polypeptide is Protein cereblon (Drosophila yakuba (Fruit fly)).